The sequence spans 320 residues: Cytochrome f (320 aa).

The first 35 residues, 1 to 35 (MENRNTFSWVKEQMTRSISVSIMIYVITQTSISNA), serve as a signal peptide directing secretion. 4 residues coordinate heme: Tyr36, Cys56, Cys59, and His60. A helical transmembrane segment spans residues 286-306 (VQGLLFFFASVILAQVFLVLK).

The protein belongs to the cytochrome f family. In terms of assembly, the 4 large subunits of the cytochrome b6-f complex are cytochrome b6, subunit IV (17 kDa polypeptide, petD), cytochrome f and the Rieske protein, while the 4 small subunits are PetG, PetL, PetM and PetN. The complex functions as a dimer. It depends on heme as a cofactor.

It is found in the plastid. Its subcellular location is the chloroplast thylakoid membrane. Functionally, component of the cytochrome b6-f complex, which mediates electron transfer between photosystem II (PSII) and photosystem I (PSI), cyclic electron flow around PSI, and state transitions. This Agrostis stolonifera (Creeping bentgrass) protein is Cytochrome f.